A 103-amino-acid polypeptide reads, in one-letter code: Small ribosomal subunit protein uS10 (103 aa).

Belongs to the universal ribosomal protein uS10 family. As to quaternary structure, part of the 30S ribosomal subunit.

In terms of biological role, involved in the binding of tRNA to the ribosomes. This Aliivibrio fischeri (strain ATCC 700601 / ES114) (Vibrio fischeri) protein is Small ribosomal subunit protein uS10.